The primary structure comprises 234 residues: MPRKHLIANQINKKQQSNAKLWQKLAKEIKAAVKVGGTDPETNYRLKAAIDKALTYNLSKDSINRNIYGNSNKEDDQLIEAEYEIYGPGGLGIIVRTLSDNPNRVISSLNGYISKLKGSLAKPNSVKINFQEQGIILTDLNNYHDEALLELLIDYELIDINSDEEGYEIITVPNAYYEVKKKLEAAGFKIHHSELKLIPLLYVQLTPEQNEMFERFSASCENDDDIQWIVANNQ.

Belongs to the TACO1 family.

It localises to the cytoplasm. The sequence is that of Probable transcriptional regulatory protein MYCGA1330 from Mycoplasmoides gallisepticum (strain R(low / passage 15 / clone 2)) (Mycoplasma gallisepticum).